Reading from the N-terminus, the 981-residue chain is Bifunctional glutamine synthetase adenylyltransferase/adenylyl-removing enzyme (981 aa).

The tract at residues 1–473 is adenylyl removase; sequence MTMPLPSIEQ…RSVFNNLIGF (473 aa). Residues 479 to 981 form an adenylyl transferase region; that stretch reads ADDSDNAWSD…HQIWQKLFFE (503 aa).

It belongs to the GlnE family. Requires Mg(2+) as cofactor.

It catalyses the reaction [glutamine synthetase]-O(4)-(5'-adenylyl)-L-tyrosine + phosphate = [glutamine synthetase]-L-tyrosine + ADP. It carries out the reaction [glutamine synthetase]-L-tyrosine + ATP = [glutamine synthetase]-O(4)-(5'-adenylyl)-L-tyrosine + diphosphate. Involved in the regulation of glutamine synthetase GlnA, a key enzyme in the process to assimilate ammonia. When cellular nitrogen levels are high, the C-terminal adenylyl transferase (AT) inactivates GlnA by covalent transfer of an adenylyl group from ATP to specific tyrosine residue of GlnA, thus reducing its activity. Conversely, when nitrogen levels are low, the N-terminal adenylyl removase (AR) activates GlnA by removing the adenylyl group by phosphorolysis, increasing its activity. The regulatory region of GlnE binds the signal transduction protein PII (GlnB) which indicates the nitrogen status of the cell. The protein is Bifunctional glutamine synthetase adenylyltransferase/adenylyl-removing enzyme of Mannheimia succiniciproducens (strain KCTC 0769BP / MBEL55E).